A 2241-amino-acid polypeptide reads, in one-letter code: Large tegument protein deneddylase (2241 aa).

The segment at 1–238 is deubiquitination activity; that stretch reads MKVTQASCHQ…IDLTGVVRES (238 aa). Residues 4–226 enclose the Peptidase C76 domain; sequence TQASCHQGDI…AARLVSTYRD (223 aa). Catalysis depends on residues C24, D160, and H162. Residues 239–314 are disordered; it reads ADTAATTTTA…STTSKTLATA (76 aa). Low complexity predominate over residues 240-250; the sequence is DTAATTTTAAP. Positions 251-268 are enriched in pro residues; sequence SLPPLPDPIVDPGCPPGV. Low complexity predominate over residues 304–314; it reads PSTTSKTLATA. The interval 327 to 331 is interaction with inner tegument protein; the sequence is SSAVP. The tract at residues 1170-1229 is disordered; it reads RSSQQKMEEQLQETRQQMTETSERLDRSLRQDPGSSSVTRVPEKPFKGQELAGRITPPPA. Residues 1190-1199 show a composition bias toward basic and acidic residues; sequence TSERLDRSLR.

Belongs to the herpesviridae large tegument protein family. Interacts with host CUL1 and CUL4A; these interactions inhibit the E3 ligase activity of cullins. Interacts with inner tegument protein. Interacts with capsid vertex specific component CVC2. Interacts with the major capsid protein/MCP.

The protein localises to the virion tegument. The protein resides in the host cytoplasm. It localises to the host nucleus. The enzyme catalyses Thiol-dependent hydrolysis of ester, thioester, amide, peptide and isopeptide bonds formed by the C-terminal Gly of ubiquitin (a 76-residue protein attached to proteins as an intracellular targeting signal).. Functionally, large tegument protein that plays multiple roles in the viral cycle. During viral entry, remains associated with the capsid while most of the tegument is detached and participates in the capsid transport toward the host nucleus. Plays a role in the routing of the capsid at the nuclear pore complex and subsequent uncoating. Within the host nucleus, acts as a deneddylase and promotes the degradation of nuclear CRLs (cullin-RING ubiquitin ligases) and thereby stabilizes nuclear CRL substrates, while cytoplasmic CRLs remain unaffected. These modifications prevent host cell cycle S-phase progression and create a favorable environment allowing efficient viral genome replication. Participates later in the secondary envelopment of capsids. Indeed, plays a linker role for the association of the outer viral tegument to the capsids together with the inner tegument protein. The chain is Large tegument protein deneddylase (UL48) from Human cytomegalovirus (strain AD169) (HHV-5).